An 81-amino-acid chain; its full sequence is Sulfur carrier protein TusA (81 aa).

Cys19 acts as the Cysteine persulfide intermediate in catalysis.

It belongs to the sulfur carrier protein TusA family.

It is found in the cytoplasm. Sulfur carrier protein which probably makes part of a sulfur-relay system. The polypeptide is Sulfur carrier protein TusA (Shewanella baltica (strain OS223)).